Consider the following 215-residue polypeptide: Cytidylate kinase (215 aa).

10–18 (GPAASGKGT) lines the ATP pocket.

The protein belongs to the cytidylate kinase family. Type 1 subfamily.

The protein resides in the cytoplasm. It carries out the reaction CMP + ATP = CDP + ADP. The enzyme catalyses dCMP + ATP = dCDP + ADP. This is Cytidylate kinase from Bartonella quintana (strain Toulouse) (Rochalimaea quintana).